A 226-amino-acid chain; its full sequence is ATP synthase F(0) complex subunit a (226 aa).

6 helical membrane passes run 6–26, 68–88, 97–117, 136–156, 164–184, and 189–209; these read FASF…IIMF, WSLM…LGLL, QLSM…FTGF, LLIP…PVAL, ITAG…LLNI, and AFIT…VALI.

This sequence belongs to the ATPase A chain family. In terms of assembly, component of the ATP synthase complex composed at least of ATP5F1A/subunit alpha, ATP5F1B/subunit beta, ATP5MC1/subunit c (homooctomer), MT-ATP6/subunit a, MT-ATP8/subunit 8, ATP5ME/subunit e, ATP5MF/subunit f, ATP5MG/subunit g, ATP5MK/subunit k, ATP5MJ/subunit j, ATP5F1C/subunit gamma, ATP5F1D/subunit delta, ATP5F1E/subunit epsilon, ATP5PF/subunit F6, ATP5PB/subunit b, ATP5PD/subunit d, ATP5PO/subunit OSCP. ATP synthase complex consists of a soluble F(1) head domain (subunits alpha(3) and beta(3)) - the catalytic core - and a membrane F(0) domain - the membrane proton channel (subunits c, a, 8, e, f, g, k and j). These two domains are linked by a central stalk (subunits gamma, delta, and epsilon) rotating inside the F1 region and a stationary peripheral stalk (subunits F6, b, d, and OSCP). Interacts with DNAJC30; interaction is direct.

It localises to the mitochondrion inner membrane. The enzyme catalyses H(+)(in) = H(+)(out). Functionally, subunit a, of the mitochondrial membrane ATP synthase complex (F(1)F(0) ATP synthase or Complex V) that produces ATP from ADP in the presence of a proton gradient across the membrane which is generated by electron transport complexes of the respiratory chain. ATP synthase complex consist of a soluble F(1) head domain - the catalytic core - and a membrane F(1) domain - the membrane proton channel. These two domains are linked by a central stalk rotating inside the F(1) region and a stationary peripheral stalk. During catalysis, ATP synthesis in the catalytic domain of F(1) is coupled via a rotary mechanism of the central stalk subunits to proton translocation. With the subunit c (ATP5MC1), forms the proton-conducting channel in the F(0) domain, that contains two crucial half-channels (inlet and outlet) that facilitate proton movement from the mitochondrial intermembrane space (IMS) into the matrix. Protons are taken up via the inlet half-channel and released through the outlet half-channel, following a Grotthuss mechanism. This chain is ATP synthase F(0) complex subunit a, found in Sus scrofa (Pig).